The following is a 362-amino-acid chain: Probable dual-specificity RNA methyltransferase RlmN (362 aa).

Glutamate 99 (proton acceptor) is an active-site residue. The region spanning 105-341 (SPDRHTVCVS…VTVRKSQGAS (237 aa)) is the Radical SAM core domain. Cysteine 112 and cysteine 346 form a disulfide bridge. [4Fe-4S] cluster is bound by residues cysteine 119, cysteine 123, and cysteine 126. S-adenosyl-L-methionine is bound by residues 171-172 (GE), serine 204, 227-229 (SLH), and asparagine 303. The active-site S-methylcysteine intermediate is cysteine 346.

The protein belongs to the radical SAM superfamily. RlmN family. Requires [4Fe-4S] cluster as cofactor.

Its subcellular location is the cytoplasm. It catalyses the reaction adenosine(2503) in 23S rRNA + 2 reduced [2Fe-2S]-[ferredoxin] + 2 S-adenosyl-L-methionine = 2-methyladenosine(2503) in 23S rRNA + 5'-deoxyadenosine + L-methionine + 2 oxidized [2Fe-2S]-[ferredoxin] + S-adenosyl-L-homocysteine. It carries out the reaction adenosine(37) in tRNA + 2 reduced [2Fe-2S]-[ferredoxin] + 2 S-adenosyl-L-methionine = 2-methyladenosine(37) in tRNA + 5'-deoxyadenosine + L-methionine + 2 oxidized [2Fe-2S]-[ferredoxin] + S-adenosyl-L-homocysteine. Its function is as follows. Specifically methylates position 2 of adenine 2503 in 23S rRNA and position 2 of adenine 37 in tRNAs. The chain is Probable dual-specificity RNA methyltransferase RlmN from Chlorobium phaeobacteroides (strain BS1).